Reading from the N-terminus, the 238-residue chain is tRNA1(Val) (adenine(37)-N6)-methyltransferase (238 aa).

It belongs to the methyltransferase superfamily. tRNA (adenine-N(6)-)-methyltransferase family.

It localises to the cytoplasm. It carries out the reaction adenosine(37) in tRNA1(Val) + S-adenosyl-L-methionine = N(6)-methyladenosine(37) in tRNA1(Val) + S-adenosyl-L-homocysteine + H(+). In terms of biological role, specifically methylates the adenine in position 37 of tRNA(1)(Val) (anticodon cmo5UAC). This Shewanella baltica (strain OS185) protein is tRNA1(Val) (adenine(37)-N6)-methyltransferase.